We begin with the raw amino-acid sequence, 295 residues long: 33 kDa chaperonin (295 aa).

2 cysteine pairs are disulfide-bonded: C238–C240 and C271–C274.

The protein belongs to the HSP33 family. In terms of processing, under oxidizing conditions two disulfide bonds are formed involving the reactive cysteines. Under reducing conditions zinc is bound to the reactive cysteines and the protein is inactive.

It localises to the cytoplasm. Its function is as follows. Redox regulated molecular chaperone. Protects both thermally unfolding and oxidatively damaged proteins from irreversible aggregation. Plays an important role in the bacterial defense system toward oxidative stress. This Clostridium botulinum (strain Alaska E43 / Type E3) protein is 33 kDa chaperonin.